We begin with the raw amino-acid sequence, 696 residues long: Elongation factor G (696 aa).

A tr-type G domain is found at 8–288 (EDYRNFGIMA…AVVDFLPSPI (281 aa)). Residues 17 to 24 (AHIDAGKT), 86 to 90 (DTPGH), and 140 to 143 (NKMD) contribute to the GTP site.

This sequence belongs to the TRAFAC class translation factor GTPase superfamily. Classic translation factor GTPase family. EF-G/EF-2 subfamily.

Its subcellular location is the cytoplasm. In terms of biological role, catalyzes the GTP-dependent ribosomal translocation step during translation elongation. During this step, the ribosome changes from the pre-translocational (PRE) to the post-translocational (POST) state as the newly formed A-site-bound peptidyl-tRNA and P-site-bound deacylated tRNA move to the P and E sites, respectively. Catalyzes the coordinated movement of the two tRNA molecules, the mRNA and conformational changes in the ribosome. This Chelativorans sp. (strain BNC1) protein is Elongation factor G.